The chain runs to 969 residues: Liprin-beta-1 (969 aa).

Ser37 bears the Phosphoserine mark. At Thr39 the chain carries Phosphothreonine. Ser40 bears the Phosphoserine mark. Residues 99–310 (GDVYQERLAR…CLSRYRKMQD (212 aa)) are a coiled coil. Lys291 carries the N6-acetyllysine modification. Disordered stretches follow at residues 342-361 (DLER…RDLL), 381-407 (LLPP…FEEG), and 424-482 (GVST…RKAR). The segment covering 346 to 358 (STSSTPGMGSPSR) has biased composition (low complexity). Phosphoserine is present on residues Ser403 and Ser435. The segment covering 426-438 (STSSLQKSSSLGN) has biased composition (low complexity). Positions 439 to 452 (LKKEASDGTDKAPT) are enriched in basic and acidic residues. Residue Lys440 forms a Glycyl lysine isopeptide (Lys-Gly) (interchain with G-Cter in SUMO2) linkage. Residue Ser500 is modified to Phosphoserine. The segment covering 518-529 (AGTSRSKGSQGT) has biased composition (polar residues). Positions 518–593 (AGTSRSKGSQ…PRLGWSRDLG (76 aa)) are disordered. Ser538 bears the Phosphoserine mark. The segment covering 543–557 (KKSRGIMRLFGKLRR) has biased composition (basic residues). Residues Ser560 and Ser595 each carry the phosphoserine modification. SAM domains are found at residues 606–670 (WTKE…LGSE) and 678–741 (LDFN…LRIN). Phosphoserine occurs at positions 753 and 757. Positions 763–835 (VQQWTNHRVM…ATHFNLLIGA (73 aa)) constitute an SAM 3 domain. 3 positions are modified to phosphoserine: Ser957, Ser959, and Ser961. At Thr963 the chain carries Phosphothreonine.

Belongs to the liprin family. Liprin-beta subfamily. As to quaternary structure, forms homodimers and heterodimers. Interacts with S100A4 in a Ca(2+)-dependent mode. Part of a cortical microtubule stabilization complex (CMSC) composed of KANK1, PPFIA1, PPFIBP1, ERC1/ELKS, PHLDB2/LL5beta, CLASPs, KIF21A and possibly additional interactors; within CMSCs KANK1 and PHLDB2/LL5beta seem to be the core components for recruiting microtubule-binding proteins KIF21A and CLASPs, whereas PPFIA1, PPFIBP1 and ERC1/ELKS serve as scaffolds for protein clustering. Interacts with KANK1 (via CC1 domain, residues 244-339).

It localises to the cytoplasm. Its subcellular location is the cell cortex. In terms of biological role, may regulate the disassembly of focal adhesions. Did not bind receptor-like tyrosine phosphatases type 2A. This is Liprin-beta-1 (Ppfibp1) from Mus musculus (Mouse).